A 126-amino-acid polypeptide reads, in one-letter code: MGQSTNPRRVADNEARAKLRMIRTSPQKLNLVAALIRGKKVERALADLEFSRKRISKEVKKTLESAIANAENNHGLDIDSLVVSEAFVGKNLVMKRFRARARGRGAKILKPFSELTIVVREVEEAA.

The protein belongs to the universal ribosomal protein uL22 family. In terms of assembly, part of the 50S ribosomal subunit.

Functionally, this protein binds specifically to 23S rRNA; its binding is stimulated by other ribosomal proteins, e.g. L4, L17, and L20. It is important during the early stages of 50S assembly. It makes multiple contacts with different domains of the 23S rRNA in the assembled 50S subunit and ribosome. The globular domain of the protein is located near the polypeptide exit tunnel on the outside of the subunit, while an extended beta-hairpin is found that lines the wall of the exit tunnel in the center of the 70S ribosome. In Maricaulis maris (strain MCS10) (Caulobacter maris), this protein is Large ribosomal subunit protein uL22.